A 279-amino-acid polypeptide reads, in one-letter code: Acetyl-coenzyme A carboxylase carboxyl transferase subunit beta (279 aa).

In terms of domain architecture, CoA carboxyltransferase N-terminal spans 23 to 279; that stretch reads LWWKCEECGA…LTTLLSLMKL (257 aa). Residues cysteine 27, cysteine 30, cysteine 46, and cysteine 49 each coordinate Zn(2+). The segment at 27–49 adopts a C4-type zinc-finger fold; sequence CEECGAALHKKQMEASDHTCPQC.

The protein belongs to the AccD/PCCB family. As to quaternary structure, acetyl-CoA carboxylase is a heterohexamer composed of biotin carboxyl carrier protein (AccB), biotin carboxylase (AccC) and two subunits each of ACCase subunit alpha (AccA) and ACCase subunit beta (AccD). Zn(2+) is required as a cofactor.

It localises to the cytoplasm. The enzyme catalyses N(6)-carboxybiotinyl-L-lysyl-[protein] + acetyl-CoA = N(6)-biotinyl-L-lysyl-[protein] + malonyl-CoA. Its pathway is lipid metabolism; malonyl-CoA biosynthesis; malonyl-CoA from acetyl-CoA: step 1/1. Functionally, component of the acetyl coenzyme A carboxylase (ACC) complex. Biotin carboxylase (BC) catalyzes the carboxylation of biotin on its carrier protein (BCCP) and then the CO(2) group is transferred by the transcarboxylase to acetyl-CoA to form malonyl-CoA. The protein is Acetyl-coenzyme A carboxylase carboxyl transferase subunit beta of Chlorobium chlorochromatii (strain CaD3).